A 272-amino-acid chain; its full sequence is Shikimate dehydrogenase (NADP(+)) (272 aa).

Residues 14–16 (SKS) and T61 contribute to the shikimate site. Residue K65 is the Proton acceptor of the active site. E77 provides a ligand contact to NADP(+). Residues N86 and D102 each contribute to the shikimate site. Residues 126 to 130 (GAGGA), 149 to 154 (NRTVSR), and M213 each bind NADP(+). Residue Y215 participates in shikimate binding. G237 is a binding site for NADP(+).

It belongs to the shikimate dehydrogenase family. In terms of assembly, homodimer.

The enzyme catalyses shikimate + NADP(+) = 3-dehydroshikimate + NADPH + H(+). It participates in metabolic intermediate biosynthesis; chorismate biosynthesis; chorismate from D-erythrose 4-phosphate and phosphoenolpyruvate: step 4/7. In terms of biological role, involved in the biosynthesis of the chorismate, which leads to the biosynthesis of aromatic amino acids. Catalyzes the reversible NADPH linked reduction of 3-dehydroshikimate (DHSA) to yield shikimate (SA). This is Shikimate dehydrogenase (NADP(+)) from Escherichia coli O81 (strain ED1a).